Consider the following 404-residue polypeptide: 4-hydroxy-3-methylbut-2-en-1-yl diphosphate synthase (ferredoxin) (404 aa).

[4Fe-4S] cluster contacts are provided by cysteine 313, cysteine 316, cysteine 347, and glutamate 354.

This sequence belongs to the IspG family. The cofactor is [4Fe-4S] cluster.

It catalyses the reaction (2E)-4-hydroxy-3-methylbut-2-enyl diphosphate + 2 oxidized [2Fe-2S]-[ferredoxin] + H2O = 2-C-methyl-D-erythritol 2,4-cyclic diphosphate + 2 reduced [2Fe-2S]-[ferredoxin] + H(+). It participates in isoprenoid biosynthesis; isopentenyl diphosphate biosynthesis via DXP pathway; isopentenyl diphosphate from 1-deoxy-D-xylulose 5-phosphate: step 5/6. Its function is as follows. Converts 2C-methyl-D-erythritol 2,4-cyclodiphosphate (ME-2,4cPP) into 1-hydroxy-2-methyl-2-(E)-butenyl 4-diphosphate. The polypeptide is 4-hydroxy-3-methylbut-2-en-1-yl diphosphate synthase (ferredoxin) (Crocosphaera subtropica (strain ATCC 51142 / BH68) (Cyanothece sp. (strain ATCC 51142))).